Reading from the N-terminus, the 193-residue chain is Probable GTP-binding protein EngB (193 aa).

The region spanning 24 to 193 (NIPEIALAGR…ELKAALAELL (170 aa)) is the EngB-type G domain. GTP contacts are provided by residues 32–39 (GRSNVGKS), 59–63 (GKTRT), 77–80 (DLPG), 144–147 (TKAD), and 174–176 (FSA). 2 residues coordinate Mg(2+): serine 39 and threonine 61.

It belongs to the TRAFAC class TrmE-Era-EngA-EngB-Septin-like GTPase superfamily. EngB GTPase family. The cofactor is Mg(2+).

Necessary for normal cell division and for the maintenance of normal septation. The chain is Probable GTP-binding protein EngB from Syntrophomonas wolfei subsp. wolfei (strain DSM 2245B / Goettingen).